We begin with the raw amino-acid sequence, 490 residues long: Tryptophan decarboxylase (490 aa).

Lysine 306 bears the N6-(pyridoxal phosphate)lysine mark.

Belongs to the group II decarboxylase family. Homodimer. Pyridoxal 5'-phosphate serves as cofactor.

Its subcellular location is the cytoplasm. It catalyses the reaction L-tryptophan + H(+) = tryptamine + CO2. Inhibited by (S)-alpha-fluoromethyltryptophan. Functionally, catalyzes the decarboxylation of tryptophan to tryptamine. Tryptamine is a neurotransmitter that induces the release of serotonin, which is suggested to modulate gastrointestinal motility. Therefore, the tryptophan decarboxylase from the gut bacteria Ruminococcus gnavus (strain ATCC 29149 / VPI C7-9) may influence host brain and behavior. Has weak activity with tyrosine and phenylalanine. This Mediterraneibacter gnavus (strain ATCC 29149 / DSM 114966 / JCM 6515 / VPI C7-9) (Ruminococcus gnavus) protein is Tryptophan decarboxylase.